We begin with the raw amino-acid sequence, 252 residues long: Imidazole glycerol phosphate synthase subunit HisF (252 aa).

Residues Asp11 and Asp130 contribute to the active site.

Belongs to the HisA/HisF family. In terms of assembly, heterodimer of HisH and HisF.

The protein localises to the cytoplasm. It carries out the reaction 5-[(5-phospho-1-deoxy-D-ribulos-1-ylimino)methylamino]-1-(5-phospho-beta-D-ribosyl)imidazole-4-carboxamide + L-glutamine = D-erythro-1-(imidazol-4-yl)glycerol 3-phosphate + 5-amino-1-(5-phospho-beta-D-ribosyl)imidazole-4-carboxamide + L-glutamate + H(+). Its pathway is amino-acid biosynthesis; L-histidine biosynthesis; L-histidine from 5-phospho-alpha-D-ribose 1-diphosphate: step 5/9. Its function is as follows. IGPS catalyzes the conversion of PRFAR and glutamine to IGP, AICAR and glutamate. The HisF subunit catalyzes the cyclization activity that produces IGP and AICAR from PRFAR using the ammonia provided by the HisH subunit. The polypeptide is Imidazole glycerol phosphate synthase subunit HisF (Staphylococcus aureus (strain bovine RF122 / ET3-1)).